The primary structure comprises 498 residues: ATP synthase subunit beta, chloroplastic (498 aa).

Residue 172–179 (GGAGVGKT) participates in ATP binding.

The protein belongs to the ATPase alpha/beta chains family. In terms of assembly, F-type ATPases have 2 components, CF(1) - the catalytic core - and CF(0) - the membrane proton channel. CF(1) has five subunits: alpha(3), beta(3), gamma(1), delta(1), epsilon(1). CF(0) has four main subunits: a(1), b(1), b'(1) and c(9-12).

It is found in the plastid. It localises to the chloroplast thylakoid membrane. It carries out the reaction ATP + H2O + 4 H(+)(in) = ADP + phosphate + 5 H(+)(out). Functionally, produces ATP from ADP in the presence of a proton gradient across the membrane. The catalytic sites are hosted primarily by the beta subunits. The chain is ATP synthase subunit beta, chloroplastic from Idiospermum australiense (Ribbonwood tree).